The primary structure comprises 199 residues: Imidazoleglycerol-phosphate dehydratase (199 aa).

The protein belongs to the imidazoleglycerol-phosphate dehydratase family.

It localises to the cytoplasm. The enzyme catalyses D-erythro-1-(imidazol-4-yl)glycerol 3-phosphate = 3-(imidazol-4-yl)-2-oxopropyl phosphate + H2O. Its pathway is amino-acid biosynthesis; L-histidine biosynthesis; L-histidine from 5-phospho-alpha-D-ribose 1-diphosphate: step 6/9. This chain is Imidazoleglycerol-phosphate dehydratase, found in Methylibium petroleiphilum (strain ATCC BAA-1232 / LMG 22953 / PM1).